The primary structure comprises 137 residues: Histone H2B.3 (137 aa).

The span at Lys1 to Asp37 shows a compositional bias: basic and acidic residues. The tract at residues Lys1–Lys45 is disordered. N6-acetyllysine occurs at positions 27 and 28. A Glycyl lysine isopeptide (Lys-Gly) (interchain with G-Cter in ubiquitin) cross-link involves residue Lys133.

The protein belongs to the histone H2B family. The nucleosome is a histone octamer containing two molecules each of H2A, H2B, H3 and H4 assembled in one H3-H4 heterotetramer and two H2A-H2B heterodimers. The octamer wraps approximately 147 bp of DNA. Post-translationally, can be acetylated to formH2BK33ac and H2BK34ac. Monoubiquitinated to form H2BK143ub1; may give a specific tag for epigenetic transcriptional activation. As to expression, ubiquitous. Highest level in shoots, fruits and young flower buds, including petals, anthers and ovules.

Its subcellular location is the nucleus. It localises to the chromosome. In terms of biological role, core component of nucleosome. Nucleosomes wrap and compact DNA into chromatin, limiting DNA accessibility to the cellular machineries which require DNA as a template. Histones thereby play a central role in transcription regulation, DNA repair, DNA replication and chromosomal stability. DNA accessibility is regulated via a complex set of post-translational modifications of histones, also called histone code, and nucleosome remodeling. The polypeptide is Histone H2B.3 (H2B-3) (Solanum lycopersicum (Tomato)).